Reading from the N-terminus, the 368-residue chain is Phosphotransferase IIC component GlvC (368 aa).

The Periplasmic segment spans residues 1–11; sequence MLSQIQRFGGA. In terms of domain architecture, PTS EIIC type-1 spans 1-368; that stretch reads MLSQIQRFGG…VGNMGGGLID (368 aa). A helical transmembrane segment spans residues 12-32; the sequence is MFTPVLLFPFAGIVVGLAILL. The Cytoplasmic segment spans residues 33-59; it reads QNPMFVGESLTDPNSLFAQIVHIIEEG. Residues 60 to 80 form a helical membrane-spanning segment; the sequence is GWTVFRNMPLIFAVGLPIGLA. The Periplasmic portion of the chain corresponds to 81-86; it reads KQAQGR. Residues 87 to 107 traverse the membrane as a helical segment; sequence ACLAVMVSFLTWNYFINAMGM. The Cytoplasmic segment spans residues 108–129; it reads TWGSYFGVDFTQDAVAGSGLTM. A helical transmembrane segment spans residues 130 to 150; the sequence is MAGIKTLDTSIIGAIIISGIV. The Periplasmic segment spans residues 151–173; that stretch reads TALHNRLFDKKLPVFLGIFQGTS. The helical transmembrane segment at 174–194 threads the bilayer; that stretch reads YVVIIAFLVMIPCAWLTLLGW. Over 195–198 the chain is Cytoplasmic; that stretch reads PKVQ. A helical membrane pass occupies residues 199-221; that stretch reads MGIESLQAFLRSAGALGVWVYTF. Residues 222–224 lie on the Periplasmic side of the membrane; that stretch reads LER. The helical transmembrane segment at 225–245 threads the bilayer; that stretch reads ILIPTGLHHFIYGQFIFGPAA. The Cytoplasmic segment spans residues 246-276; that stretch reads VEGGIQMYWAQHLQEFSLSAEPLKSLFPEGG. The chain crosses the membrane as a helical span at residues 277-297; sequence FALHGNSKIFGAVGISLAMYF. Topologically, residues 298 to 306 are periplasmic; it reads TAAPENRVK. The chain crosses the membrane as a helical span at residues 307-327; sequence VAGLLIPATLTAMLVGITEPL. Position 328 (Glu328) is a topological domain, cytoplasmic. A helical transmembrane segment spans residues 329–349; sequence FTFLFISPLLFAVHAVLAASM. The Periplasmic segment spans residues 350–368; it reads STVMYLFGVVGNMGGGLID.

It is found in the cell inner membrane. Functionally, the phosphoenolpyruvate-dependent sugar phosphotransferase system (PTS), a major carbohydrate active -transport system, catalyzes the phosphorylation of incoming sugar substrates concomitant with their translocation across the cell membrane. This operon may be cryptic in wild-type K12 strains. In Escherichia coli (strain K12), this protein is Phosphotransferase IIC component GlvC.